The following is a 496-amino-acid chain: L-arabinose isomerase (496 aa).

Residues Glu-302, Glu-329, His-346, and His-445 each coordinate Mn(2+).

The protein belongs to the arabinose isomerase family. It depends on Mn(2+) as a cofactor.

It carries out the reaction beta-L-arabinopyranose = L-ribulose. It participates in carbohydrate degradation; L-arabinose degradation via L-ribulose; D-xylulose 5-phosphate from L-arabinose (bacterial route): step 1/3. Its function is as follows. Catalyzes the conversion of L-arabinose to L-ribulose. In Thermotoga neapolitana (strain ATCC 49049 / DSM 4359 / NBRC 107923 / NS-E), this protein is L-arabinose isomerase.